We begin with the raw amino-acid sequence, 383 residues long: tRNA-specific 2-thiouridylase MnmA (383 aa).

Residues Gly-31–Ser-38 and Leu-57 contribute to the ATP site. The active-site Nucleophile is the Cys-118. Cys-118 and Cys-217 form a disulfide bridge. Gly-143 serves as a coordination point for ATP. The segment at Lys-167 to Gln-169 is interaction with tRNA. Cys-217 serves as the catalytic Cysteine persulfide intermediate. The interaction with tRNA stretch occupies residues Arg-322–Tyr-323.

The protein belongs to the MnmA/TRMU family.

It is found in the cytoplasm. It carries out the reaction S-sulfanyl-L-cysteinyl-[protein] + uridine(34) in tRNA + AH2 + ATP = 2-thiouridine(34) in tRNA + L-cysteinyl-[protein] + A + AMP + diphosphate + H(+). In terms of biological role, catalyzes the 2-thiolation of uridine at the wobble position (U34) of tRNA, leading to the formation of s(2)U34. This Synechococcus sp. (strain RCC307) protein is tRNA-specific 2-thiouridylase MnmA.